The sequence spans 331 residues: D-lactate dehydrogenase (331 aa).

NAD(+)-binding positions include 155 to 156 (HI), Asp175, 206 to 207 (VP), Asn212, 233 to 235 (AAR), and Asp259. Residue Arg235 is part of the active site. Glu264 is an active-site residue. The active-site Proton donor is the His296.

Belongs to the D-isomer specific 2-hydroxyacid dehydrogenase family. As to quaternary structure, homodimer.

The enzyme catalyses (R)-lactate + NAD(+) = pyruvate + NADH + H(+). In Leuconostoc mesenteroides subsp. cremoris, this protein is D-lactate dehydrogenase.